A 109-amino-acid polypeptide reads, in one-letter code: uncharacterized protein (109 aa).

One can recognise an HTH hxlR-type domain in the interval 10-109 (APFEYTLSLI…WGMAQGGPHM (100 aa)).

This is an uncharacterized protein from Bacillus subtilis (strain 168).